A 45-amino-acid chain; its full sequence is Large ribosomal subunit protein bL34 (45 aa).

It belongs to the bacterial ribosomal protein bL34 family.

The polypeptide is Large ribosomal subunit protein bL34 (Beutenbergia cavernae (strain ATCC BAA-8 / DSM 12333 / CCUG 43141 / JCM 11478 / NBRC 16432 / NCIMB 13614 / HKI 0122)).